A 314-amino-acid polypeptide reads, in one-letter code: Synaptophysin (314 aa).

Residues 1 to 25 lie on the Cytoplasmic side of the membrane; it reads MLLLADMDVVNQLVAGGQFRVVKEP. In terms of domain architecture, MARVEL spans 21–228; sequence VVKEPLGFVK…NLWFVFKETG (208 aa). The helical transmembrane segment at 26–49 threads the bilayer; it reads LGFVKVLQWVFAIFAFATCGSYTG. The Vesicular portion of the chain corresponds to 50 to 107; the sequence is ELRLSVECANKTESALNIEVEFEYPFRLHQVYFDAPSCVKGGTTKIFLVGDYSSSAEF. An N-linked (GlcNAc...) asparagine glycan is attached at Asn59. Tyr81 carries the phosphotyrosine modification. The chain crosses the membrane as a helical span at residues 108-131; that stretch reads FVTVAVFAFLYSMGALATYIFLQN. Over 132 to 138 the chain is Cytoplasmic; that stretch reads KYRENNK. Residues 139–162 form a helical membrane-spanning segment; sequence GPMMDFLATAVFAFMWLVSSSAWA. The Vesicular portion of the chain corresponds to 163–200; it reads KGLSDVKMATDPENIIKEMPMCRQTGNTCKELRDPVTS. Residues 201–224 traverse the membrane as a helical segment; it reads GLNTSVVFGFLNLVLWVGNLWFVF. Residues 225 to 314 lie on the Cytoplasmic side of the membrane; the sequence is KETGWAAPFM…GAPTSFSNQM (90 aa). Phosphothreonine is present on Thr227. The segment at 239 to 314 is disordered; the sequence is GAPEKQPAPG…GAPTSFSNQM (76 aa). Gly residues predominate over residues 254–264; the sequence is AGYGQGPGGYG. The interval 255 to 305 is repeats, Gly-rich; sequence GYGQGPGGYGPQDSYGPQGGYQPDYGQPASGGGGGYGPQGDYGQQGYGQQG. A compositionally biased stretch (low complexity) spans 265 to 282; it reads PQDSYGPQGGYQPDYGQP. 2 positions are modified to phosphotyrosine: Tyr279 and Tyr296. A compositionally biased stretch (gly residues) spans 283–303; sequence ASGGGGGYGPQGDYGQQGYGQ.

It belongs to the synaptophysin/synaptobrevin family. As to quaternary structure, homohexamer or homotetramer. Interacts with SRCIN1. Interacts with VAMP2; the interaction is inhibited by interaction of VAPM2 with SEPT8. In terms of processing, ubiquitinated; mediated by SIAH1 or SIAH2 and leading to its subsequent proteasomal degradation. Post-translationally, phosphorylated by SRC.

Its subcellular location is the cytoplasmic vesicle. It localises to the secretory vesicle. The protein localises to the synaptic vesicle membrane. The protein resides in the synapse. It is found in the synaptosome. Its function is as follows. Possibly involved in structural functions as organizing other membrane components or in targeting the vesicles to the plasma membrane. Involved in the regulation of short-term and long-term synaptic plasticity. The sequence is that of Synaptophysin (Syp) from Mus musculus (Mouse).